The chain runs to 300 residues: Acetylglutamate kinase (300 aa).

Residues 68-69, arginine 90, and asparagine 195 each bind substrate; that span reads GG.

Belongs to the acetylglutamate kinase family. ArgB subfamily.

The protein resides in the cytoplasm. The enzyme catalyses N-acetyl-L-glutamate + ATP = N-acetyl-L-glutamyl 5-phosphate + ADP. It functions in the pathway amino-acid biosynthesis; L-arginine biosynthesis; N(2)-acetyl-L-ornithine from L-glutamate: step 2/4. In terms of biological role, catalyzes the ATP-dependent phosphorylation of N-acetyl-L-glutamate. In Azotobacter vinelandii (strain DJ / ATCC BAA-1303), this protein is Acetylglutamate kinase.